A 1358-amino-acid polypeptide reads, in one-letter code: DNA-directed RNA polymerase subunit beta (1358 aa).

It belongs to the RNA polymerase beta chain family. In terms of assembly, the RNAP catalytic core consists of 2 alpha, 1 beta, 1 beta' and 1 omega subunit. When a sigma factor is associated with the core the holoenzyme is formed, which can initiate transcription.

The catalysed reaction is RNA(n) + a ribonucleoside 5'-triphosphate = RNA(n+1) + diphosphate. DNA-dependent RNA polymerase catalyzes the transcription of DNA into RNA using the four ribonucleoside triphosphates as substrates. The chain is DNA-directed RNA polymerase subunit beta from Chromohalobacter salexigens (strain ATCC BAA-138 / DSM 3043 / CIP 106854 / NCIMB 13768 / 1H11).